A 328-amino-acid chain; its full sequence is 4-hydroxythreonine-4-phosphate dehydrogenase (328 aa).

Substrate-binding residues include histidine 133 and threonine 134. A divalent metal cation is bound by residues histidine 163, histidine 208, and histidine 263. Residues lysine 271, asparagine 280, and arginine 289 each coordinate substrate.

Belongs to the PdxA family. In terms of assembly, homodimer. The cofactor is Zn(2+). Mg(2+) serves as cofactor. Co(2+) is required as a cofactor.

It localises to the cytoplasm. The catalysed reaction is 4-(phosphooxy)-L-threonine + NAD(+) = 3-amino-2-oxopropyl phosphate + CO2 + NADH. It participates in cofactor biosynthesis; pyridoxine 5'-phosphate biosynthesis; pyridoxine 5'-phosphate from D-erythrose 4-phosphate: step 4/5. Functionally, catalyzes the NAD(P)-dependent oxidation of 4-(phosphooxy)-L-threonine (HTP) into 2-amino-3-oxo-4-(phosphooxy)butyric acid which spontaneously decarboxylates to form 3-amino-2-oxopropyl phosphate (AHAP). The polypeptide is 4-hydroxythreonine-4-phosphate dehydrogenase (Chromobacterium violaceum (strain ATCC 12472 / DSM 30191 / JCM 1249 / CCUG 213 / NBRC 12614 / NCIMB 9131 / NCTC 9757 / MK)).